The chain runs to 156 residues: Endogenous retrovirus group K member 25 Pro protein (156 aa).

The region spanning 21–96 (FEGLVDTGAD…IPLNLWGRDL (76 aa)) is the Peptidase A2 domain. The active site involves aspartate 26. One can recognise a G-patch domain in the interval 111 to 156 (YSPTSQKIMTKMGYIPGKGLGKNEDGIKIPVEAKINQKREGIGYPF).

Belongs to the peptidase A2 family. HERV class-II K(HML-2) subfamily. In terms of assembly, active as a homodimer. In terms of processing, autoproteolytically processed at the N-terminus. Expected C-terminal autoprocessing not detected. The sequence shown is that of the processed Pro protein.

The enzyme catalyses Processing at the authentic HIV-1 PR recognition site and release of the mature p17 matrix and the p24 capsid protein, as a result of the cleavage of the -SQNY-|-PIVQ- cleavage site.. Its function is as follows. Retroviral proteases have roles in processing of the primary translation products and the maturation of the viral particle. Endogenous Pro proteins may have kept, lost or modified their original function during evolution. This endogenous protein has retained most of the characteristics of retroviral proteases. This is Endogenous retrovirus group K member 25 Pro protein (ERVK-25) from Homo sapiens (Human).